A 1036-amino-acid polypeptide reads, in one-letter code: Putative GPI-anchored protein pfl2 (1036 aa).

Residues 1–23 (MKFFTASTLFLLAAQSLNSGVSA) form the signal peptide. N-linked (GlcNAc...) asparagine glycans are attached at residues Asn-66, Asn-97, Asn-165, Asn-201, Asn-233, Asn-259, Asn-277, Asn-296, Asn-312, Asn-331, Asn-347, Asn-363, Asn-379, Asn-395, Asn-410, Asn-429, Asn-445, Asn-461, Asn-477, Asn-493, Asn-509, Asn-524, Asn-543, Asn-559, and Asn-573. Disordered stretches follow at residues 88–130 (SSSL…SSLA) and 147–183 (SSLA…SLSS). The segment covering 243–585 (SSISSTVSSS…ITSSASGSTG (343 aa)) has biased composition (low complexity). Residues 243–710 (SSISSTVSSS…PLSNSTVAPT (468 aa)) are disordered. Residues 586-595 (EFTNTNSGNG) show a composition bias toward polar residues. A compositionally biased stretch (low complexity) spans 597–630 (VSGSVTTPTSTPLSNSTVAPTSTFTSSGFNTTSG). 9 N-linked (GlcNAc...) asparagine glycosylation sites follow: Asn-611, Asn-626, Asn-642, Asn-657, Asn-673, Asn-688, Asn-704, Asn-719, and Asn-735. Residues 631 to 647 (LPTSSASTPLSNSTVAP) are compositionally biased toward polar residues. A compositionally biased stretch (low complexity) spans 648–692 (TSTFTSSGFNTTSGLPTSSASTPSSNSSIVPTSTFTSSGFNTTSG). Positions 693-709 (LPTSSASTPLSNSTVAP) are enriched in polar residues. 3 stretches are compositionally biased toward low complexity: residues 722 to 831 (SGLP…TTAS), 838 to 862 (PTAA…ATYT), and 885 to 906 (IPVN…SFTP). Disordered stretches follow at residues 722-862 (SGLP…ATYT) and 885-918 (IPVN…SYSN). 7 N-linked (GlcNAc...) asparagine glycosylation sites follow: Asn-918, Asn-924, Asn-930, Asn-933, Asn-939, Asn-947, and Asn-977. Residues 978 to 1011 (TTATSGSDDDVKTASTSSSTSYTSSSSSSSSTTS) form a disordered region. Low complexity predominate over residues 990–1011 (TASTSSSTSYTSSSSSSSSTTS). A lipid anchor (GPI-anchor amidated serine) is attached at Ser-1011. Positions 1012-1036 (AASSKASVSMGLNGLMIAAVILLVA) are cleaved as a propeptide — removed in mature form.

It is found in the cell membrane. Functionally, may be involved in agglutination during conjugation or other aspects of colony formation. Induces flocculation when overexpressed. This Schizosaccharomyces pombe (strain 972 / ATCC 24843) (Fission yeast) protein is Putative GPI-anchored protein pfl2.